A 366-amino-acid chain; its full sequence is Ferredoxin--NADP reductase (366 aa).

FAD contacts are provided by D51, Q59, Y64, V104, F139, D308, and T349.

Belongs to the ferredoxin--NADP reductase type 2 family. As to quaternary structure, homodimer. FAD serves as cofactor.

It catalyses the reaction 2 reduced [2Fe-2S]-[ferredoxin] + NADP(+) + H(+) = 2 oxidized [2Fe-2S]-[ferredoxin] + NADPH. The protein is Ferredoxin--NADP reductase of Methylibium petroleiphilum (strain ATCC BAA-1232 / LMG 22953 / PM1).